Here is a 331-residue protein sequence, read N- to C-terminus: PTS-dependent dihydroxyacetone kinase 2, dihydroxyacetone-binding subunit DhaK (331 aa).

The 322-residue stretch at 7–328 (DGYEAVEEML…LDTPCDTPYF (322 aa)) folds into the DhaK domain. Dihydroxyacetone-binding positions include 55 to 58 (GSGH) and D111. Catalysis depends on H58, which acts as the Proton acceptor. H218 serves as the catalytic Tele-hemiaminal-histidine intermediate.

Homodimer. The dihydroxyacetone kinase complex is composed of a homodimer of DhaM, a homodimer of DhaK and the subunit DhaL.

The protein localises to the cytoplasm. The catalysed reaction is dihydroxyacetone + phosphoenolpyruvate = dihydroxyacetone phosphate + pyruvate. It participates in polyol metabolism; glycerol degradation. Dihydroxyacetone binding subunit of the dihydroxyacetone kinase, which is responsible for the phosphoenolpyruvate (PEP)-dependent phosphorylation of dihydroxyacetone via a phosphoryl group transfer from DhaL-ATP. This is PTS-dependent dihydroxyacetone kinase 2, dihydroxyacetone-binding subunit DhaK from Listeria innocua serovar 6a (strain ATCC BAA-680 / CLIP 11262).